A 523-amino-acid chain; its full sequence is Dynein regulatory complex subunit 3 (523 aa).

LRR repeat units lie at residues 44–65 (DVLS…WQFE), 66–87 (NLRK…ENLA), 88–109 (HLVW…DTLV), 110–131 (NLED…DALV), and 132–153 (KLQV…IYLR). The LRRCT domain occupies 166–204 (NPISEAEDYKMFICAYLPDLMYLDYRRIDDHTKKLAEAK). Coiled coils occupy residues 208 to 242 (SIDE…AFVE) and 366 to 391 (MTLE…VDMV).

Belongs to the DRC3 family. As to quaternary structure, component of the nexin-dynein regulatory complex (N-DRC). Interacts with DRC1. Interacts with TCTE1/DRC5. Interacts with DRC7.

The protein localises to the cytoplasm. It is found in the cytoskeleton. It localises to the cilium axoneme. The protein resides in the cell projection. Its subcellular location is the cilium. The protein localises to the flagellum axoneme. It is found in the flagellum. Component of the nexin-dynein regulatory complex (N-DRC) a key regulator of ciliary/flagellar motility which maintains the alignment and integrity of the distal axoneme and regulates microtubule sliding in motile axonemes. The polypeptide is Dynein regulatory complex subunit 3 (DRC3) (Homo sapiens (Human)).